The primary structure comprises 478 residues: Lipoprotein lipase (478 aa).

A signal peptide spans 1 to 27; sequence MESKVLLLLALSVWLQSLTVSRGGLVA. The segment at 35 to 56 is interaction with GPIHBP1; sequence KDFRDIESKFALRTPEDTAEDT. A disulfide bridge links Cys57 with Cys70. N-linked (GlcNAc...) asparagine glycosylation occurs at Asn73. Tyr124 carries the post-translational modification 3'-nitrotyrosine. Catalysis depends on Ser162, which acts as the Nucleophile. Residue Asp186 is the Charge relay system of the active site. The residue at position 194 (Tyr194) is a 3'-nitrotyrosine. The Ca(2+) site is built by Ala197, Arg200, Ser202, and Asp205. Cysteines 246 and 269 form a disulfide. An essential for determining substrate specificity region spans residues 246–269; that stretch reads CNIGEALRVIAERGLGDVDQLVKC. Residue His271 is the Charge relay system of the active site. 2 cysteine pairs are disulfide-bonded: Cys294–Cys313 and Cys305–Cys308. Residues 344 to 467 enclose the PLAT domain; the sequence is FHYQVKIHFS…KGKSPVIFVK (124 aa). Position 346 is a 3'-nitrotyrosine (Tyr346). N-linked (GlcNAc...) asparagine glycosylation occurs at Asn389. The segment at 420 to 424 is important for interaction with lipoprotein particles; that stretch reads WSNWW. Residues 433–437 form an important for heparin binding region; that stretch reads KIRVK. Residues 446–470 are interaction with GPIHBP1; sequence IFCSREKMSYLQKGKSPVIFVKCHD. Cys448 and Cys468 are joined by a disulfide.

The protein belongs to the AB hydrolase superfamily. Lipase family. As to quaternary structure, homodimer. Interacts with GPIHBP1 with 1:1 stoichiometry. Interacts with APOC2; the interaction activates LPL activity in the presence of lipids. Interaction with heparan sulfate proteoglycans is required to protect LPL against loss of activity. Associates with lipoprotein particles in blood plasma. Interacts with LMF1 and SEL1L; interaction with SEL1L is required to prevent aggregation of newly synthesized LPL in the endoplasmic reticulum (ER), and for normal export of LPL from the ER to the extracellular space. Interacts with SORL1; SORL1 acts as a sorting receptor, promoting LPL localization to endosomes and later to lysosomes, leading to degradation of newly synthesized LPL. Tyrosine nitration after lipopolysaccharide (LPS) challenge down-regulates the lipase activity.

Its subcellular location is the cell membrane. It is found in the secreted. The protein localises to the extracellular space. It localises to the extracellular matrix. The enzyme catalyses a triacylglycerol + H2O = a diacylglycerol + a fatty acid + H(+). It catalyses the reaction a 1,2-diacyl-sn-glycero-3-phosphocholine + H2O = a 2-acyl-sn-glycero-3-phosphocholine + a fatty acid + H(+). The catalysed reaction is 1,2,3-tri-(9Z-octadecenoyl)-glycerol + H2O = di-(9Z)-octadecenoylglycerol + (9Z)-octadecenoate + H(+). It carries out the reaction 1,2-di-(9Z-octadecenoyl)-sn-glycero-3-phosphocholine + H2O = (9Z-octadecenoyl)-sn-glycero-3-phosphocholine + (9Z)-octadecenoate + H(+). The enzyme catalyses 1,2,3-tributanoylglycerol + H2O = dibutanoylglycerol + butanoate + H(+). It catalyses the reaction 1,2-dihexadecanoyl-sn-glycero-3-phosphocholine + H2O = hexadecanoyl-sn-glycero-3-phosphocholine + hexadecanoate + H(+). Its activity is regulated as follows. The apolipoprotein APOC2 acts as a coactivator of LPL activity. Ca(2+) binding promotes protein stability and formation of the active homodimer. Interaction with GPIHBP1 protects LPL against inactivation by ANGPTL4. Its function is as follows. Key enzyme in triglyceride metabolism. Catalyzes the hydrolysis of triglycerides from circulating chylomicrons and very low density lipoproteins (VLDL), and thereby plays an important role in lipid clearance from the blood stream, lipid utilization and storage. Although it has both phospholipase and triglyceride lipase activities it is primarily a triglyceride lipase with low but detectable phospholipase activity. Mediates margination of triglyceride-rich lipoprotein particles in capillaries. Recruited to its site of action on the luminal surface of vascular endothelium by binding to GPIHBP1 and cell surface heparan sulfate proteoglycans. This is Lipoprotein lipase (LPL) from Ovis aries (Sheep).